The following is a 273-amino-acid chain: 5-deoxy-glucuronate isomerase (273 aa).

It belongs to the isomerase IolB family.

The enzyme catalyses 5-deoxy-D-glucuronate = 5-dehydro-2-deoxy-D-gluconate. Its pathway is polyol metabolism; myo-inositol degradation into acetyl-CoA; acetyl-CoA from myo-inositol: step 4/7. Involved in the isomerization of 5-deoxy-glucuronate (5DG) to 5-dehydro-2-deoxy-D-gluconate (DKG or 2-deoxy-5-keto-D-gluconate). The protein is 5-deoxy-glucuronate isomerase of Listeria monocytogenes serovar 1/2a (strain ATCC BAA-679 / EGD-e).